The chain runs to 246 residues: MILFPAIDLKGGRCVRLVQGDMAQATVFGDDPAAQAERFERQGFSYLHMVDLDGAFAGKPQNAAAVEAVLARVKIPVQLGGGVRNLATVEAWLEKGVSRIIIGTAALRDPEFTRKAARLHPGKIAVGIDARDGRVAVEGWAETSDITAEELGRRFEDAGVAAIIYTDISRDGLLTGLNIEGTLALAGALKIPVIASGGLASLADVERLLQPDCAKLEGAITGRALYDGRLDPAAALELIARAKTAA.

D8 acts as the Proton acceptor in catalysis. D129 (proton donor) is an active-site residue.

It belongs to the HisA/HisF family.

It is found in the cytoplasm. It carries out the reaction 1-(5-phospho-beta-D-ribosyl)-5-[(5-phospho-beta-D-ribosylamino)methylideneamino]imidazole-4-carboxamide = 5-[(5-phospho-1-deoxy-D-ribulos-1-ylimino)methylamino]-1-(5-phospho-beta-D-ribosyl)imidazole-4-carboxamide. It participates in amino-acid biosynthesis; L-histidine biosynthesis; L-histidine from 5-phospho-alpha-D-ribose 1-diphosphate: step 4/9. The sequence is that of 1-(5-phosphoribosyl)-5-[(5-phosphoribosylamino)methylideneamino] imidazole-4-carboxamide isomerase from Methylocella silvestris (strain DSM 15510 / CIP 108128 / LMG 27833 / NCIMB 13906 / BL2).